The sequence spans 352 residues: Selenide, water dikinase (352 aa).

Cys-23 is a catalytic residue. ATP-binding positions include Lys-26 and 54 to 56; that span reads SRD. Asp-57 contributes to the Mg(2+) binding site. ATP-binding positions include Asp-74, Asp-97, and 145-147; that span reads GHS. Asp-97 provides a ligand contact to Mg(2+). Asp-233 lines the Mg(2+) pocket.

Belongs to the selenophosphate synthase 1 family. Class I subfamily. In terms of assembly, homodimer. Mg(2+) is required as a cofactor.

It carries out the reaction hydrogenselenide + ATP + H2O = selenophosphate + AMP + phosphate + 2 H(+). In terms of biological role, synthesizes selenophosphate from selenide and ATP. The protein is Selenide, water dikinase of Shewanella sp. (strain MR-7).